The following is a 240-amino-acid chain: Aquaporin Z (240 aa).

2 helical membrane-spanning segments follow: residues 10–30 (AIGTFWLTFAGCGSAVIAAGF) and 35–55 (IGLVGVSLAFGLSVVTMAYAI). The NPA 1 motif lies at 64–66 (NPA). The next 3 helical transmembrane spans lie at 82-102 (ILPYVIAQVCGAIVAAELLYI), 131-151 (MMACFLTEVVMTMMFLFIIMG), and 160-180 (GFAPLAIGLALVMIHLVSIPV). An NPA 2 motif is present at residues 186–188 (NPA). A helical membrane pass occupies residues 194-214 (ALFVGGWAMAQLWLFWVAPLI).

This sequence belongs to the MIP/aquaporin (TC 1.A.8) family. Homotetramer.

It is found in the cell inner membrane. The enzyme catalyses H2O(in) = H2O(out). Its function is as follows. Channel that permits osmotically driven movement of water in both directions. It is involved in the osmoregulation and in the maintenance of cell turgor during volume expansion in rapidly growing cells. It mediates rapid entry or exit of water in response to abrupt changes in osmolarity. The polypeptide is Aquaporin Z (Bradyrhizobium diazoefficiens (strain JCM 10833 / BCRC 13528 / IAM 13628 / NBRC 14792 / USDA 110)).